Here is a 254-residue protein sequence, read N- to C-terminus: Fluoride-specific ion channel FluC 1 (254 aa).

Helical transmembrane passes span 19-39 (LDIL…TALY), 51-71 (IIGM…YGSV), and 80-100 (AFLI…VAVL). Na(+) is bound by residues Gly58 and Ser61.

This sequence belongs to the fluoride channel Fluc/FEX (TC 1.A.43) family.

The protein localises to the cell inner membrane. The enzyme catalyses fluoride(in) = fluoride(out). Na(+) is not transported, but it plays an essential structural role and its presence is essential for fluoride channel function. Its function is as follows. Fluoride-specific ion channel. Important for reducing fluoride concentration in the cell, thus reducing its toxicity. The chain is Fluoride-specific ion channel FluC 1 from Brucella suis biovar 1 (strain 1330).